The chain runs to 732 residues: Iron-sulfur clusters transporter ATM1, mitochondrial (732 aa).

The transit peptide at 1–55 (MGFGSCSRHALFTPAAFSGSFTTMTTSCFKRVYTAQIHGGDALGKRLPSVSSFSG) directs the protein to the mitochondrion. Topologically, residues 56–143 (QLPRHGLHRQ…KNNPNVKFRV (88 aa)) are mitochondrial matrix. Positions 71–114 (STSHRRQTSPPPSPRTTSQSPTVPSKASTTPPTSLNTSKPIATE) are disordered. A compositionally biased stretch (low complexity) spans 85–95 (RTTSQSPTVPS). Over residues 96–114 (KASTTPPTSLNTSKPIATE) the composition is skewed to polar residues. The helical transmembrane segment at 144-164 (IGALTLLVAGKVLNVQVPFFF) threads the bilayer. An ABC transmembrane type-1 domain is found at 144–432 (IGALTLLVAG…LGTVYRELRQ (289 aa)). Residues 165–181 (KTIVDSLNVPITESTTV) lie on the Mitochondrial intermembrane side of the membrane. A helical transmembrane segment spans residues 182–202 (WVLAGASIAGYGAARILTTLF). Residues 203-262 (GELRNAVFASVAQNAIRKVARETFEHLLNMDMKFHLERQTGGLTRAIDRGTKGISFILSS) lie on the Mitochondrial matrix side of the membrane. Residues 263–283 (IVFHVIPTALEISMVCGILSW) traverse the membrane as a helical segment. K284 is a topological domain (mitochondrial intermembrane). The helical transmembrane segment at 285–305 (FGWDFAAVTAITMLLYTWFTI) threads the bilayer. Residues 306 to 378 (KTTAWRTTFR…SLAALNSGQN (73 aa)) lie on the Mitochondrial matrix side of the membrane. Residues 311 to 315 (RTTFR) and 374 to 377 (NSGQ) each bind glutathione. The helical transmembrane segment at 379 to 399 (FIFSSALTMMMLLGAQGIVKG) threads the bilayer. Residues 400–405 (TMTVGD) are Mitochondrial intermembrane-facing. Residues 406–426 (LVLVNQLVFQLSLPLNFLGTV) form a helical membrane-spanning segment. G424 contributes to the glutathione binding site. The Mitochondrial matrix portion of the chain corresponds to 427 to 732 (YRELRQSLID…LEVVDEKKKQ (306 aa)). The ABC transporter domain maps to 466–702 (IEFRNVAFAY…PGGVYHRLWQ (237 aa)). Residues Y475 and 499–506 (GPSGCGKS) each bind ATP. A disordered region spans residues 708 to 732 (STQPTDEEIERQREELEVVDEKKKQ). Residues 717–732 (ERQREELEVVDEKKKQ) are compositionally biased toward basic and acidic residues.

This sequence belongs to the ABC transporter superfamily. ABCB family. Heavy Metal importer (TC 3.A.1.210) subfamily. In terms of assembly, homodimer.

It is found in the mitochondrion inner membrane. Functionally, performs an essential function in the generation of cytoplasmic iron-sulfur proteins by mediating the ATP-dependent export of mitochondrial Fe/S cluster precursors synthesized by NFS1 and other mitochondrial proteins. Hydrolyzes ATP. Binds glutathione and may function by transporting a glutathione-conjugated iron-sulfur compound. Plays a role during copper stress, in a manner dependent on the copper metalloregulatory transcription factor CUF1. This is Iron-sulfur clusters transporter ATM1, mitochondrial from Cryptococcus neoformans var. grubii serotype A (strain H99 / ATCC 208821 / CBS 10515 / FGSC 9487) (Filobasidiella neoformans var. grubii).